The chain runs to 459 residues: Ammonium transporter Rh type B (459 aa).

At 1 to 10 (MAESTNLRLR) the chain is on the cytoplasmic side. A helical membrane pass occupies residues 11-31 (LPLICIILEVILIILFGVLVE). Residues 32-58 (YNDDTDAKKWNKNNSTDPATNEFYYRY) lie on the Extracellular side of the membrane. A glycan (N-linked (GlcNAc...) asparagine) is linked at N45. A helical membrane pass occupies residues 59–79 (PSFQDVHVMIFVGFGFLMTFL). Residues 80 to 87 (QRYGFSSM) are Cytoplasmic-facing. The helical transmembrane segment at 88–108 (GFNFLIAAFSLQWATLMQGFF) threads the bilayer. Residues 109 to 121 (HGMHHGKIHVGVT) are Extracellular-facing. The helical transmembrane segment at 122 to 142 (SMINADFCTGAVLISFGAVLG) threads the bilayer. Over 143 to 149 (KTSPVQL) the chain is Cytoplasmic. A helical membrane pass occupies residues 150 to 170 (LVMAILEVTLFAVNEYILLSI). Residues 171 to 176 (LGANDA) are Extracellular-facing. A helical transmembrane segment spans residues 177-197 (GGSMTIHTFGAYFGLMVTRIL). The Cytoplasmic segment spans residues 198–216 (HRPNLDKSKHKNSSVYHSD). A helical membrane pass occupies residues 217–237 (LFAMIGTIFLWMFWPSFNSAI). At 238 to 248 (TQYGDPQHRTA) the chain is on the extracellular side. The chain crosses the membrane as a helical span at residues 249–269 (ANTYYSLAACTLATFGFSSLV). Residues 270 to 274 (NPEGK) are Cytoplasmic-facing. The helical transmembrane segment at 275–295 (LDMVHIQNAALAGGVAVGTAG) threads the bilayer. Position 296 (E296) is a topological domain, extracellular. A helical membrane pass occupies residues 297–317 (MMLTPFGSMIVGFLAGTISVL). Residues 318–340 (GYKYLTPFMESKLKIQDTCGIHN) lie on the Cytoplasmic side of the membrane. The helical transmembrane segment at 341–361 (LHGMPGILGAIVGAVTAALAS) threads the bilayer. Over 362-392 (RDVYGNGLDKVFLEAADNSQWSAQTKGGFQA) the chain is Extracellular. The helical transmembrane segment at 393–413 (ISLAVTLGIALIGGLITGFLL) threads the bilayer. The Cytoplasmic segment spans residues 414–459 (KLPIYGTPPDTQCFEDAVYWEVPGEEEDHHELNEVSTQNEVEKLNS). Residues 440–459 (EDHHELNEVSTQNEVEKLNS) are disordered.

It belongs to the ammonium transporter (TC 2.A.49) family. Rh subfamily.

It localises to the basolateral cell membrane. The protein localises to the cytoplasmic vesicle membrane. Functionally, functions as an ammonia transporter. May play a role in the elimination of ammonia in the gill. The chain is Ammonium transporter Rh type B (rhbg) from Danio rerio (Zebrafish).